The primary structure comprises 487 residues: L-tartrate/succinate antiporter (487 aa).

Helical transmembrane passes span 10 to 30 (YLAP…AGLE), 33 to 53 (TWLY…EPVP), 54 to 74 (GAVV…WLLF), 93 to 113 (WAVS…FMFG), 137 to 157 (TLFL…VTPS), 189 to 209 (IGSY…AIFL), 236 to 256 (FLGM…LAYV), 292 to 312 (LMVG…AAMV), 313 to 333 (GYSV…DIVS), 340 to 360 (VFFW…TGFI), 370 to 390 (SLSG…FYLL), 393 to 413 (FFAS…AAAL), 418 to 438 (IPLP…SILT), and 465 to 485 (IFGL…MPVV).

Belongs to the SLC13A/DASS transporter (TC 2.A.47) family. DIT1 subfamily.

Its subcellular location is the cell inner membrane. The catalysed reaction is (2R,3R)-tartrate(out) + succinate(in) = (2R,3R)-tartrate(in) + succinate(out). Its function is as follows. Catalyzes the uptake of tartrate in exchange for intracellular succinate. Essential for anaerobic L-tartrate fermentation. The protein is L-tartrate/succinate antiporter (ttdT) of Shigella flexneri.